A 359-amino-acid chain; its full sequence is MRQILFAAGIALAVSILLTPVLIKAFSRQGFGQEIRVEGPASHQSKRGTPTMGGVAILAGLWAGYWGSHLIGIGYDADGPSASGLLVLGLTTALGGVGFLDDFIKIRKQRNLGLNKTAKLVGQLIAAVAFGILALQFRGANDLTPGSEHLSYVRDIATVTMGSVVFVAFCYLLVSAWSNAVNLTDGLDGLAAGSMSLVLGAYVIITFWQYRNACETSPGKGCYDVRDPLDLALICAAGAGACIGFLWWNAAPAKIFMGDTGSLALGGMLAGLSITTRTELLMVVIGALFVAEAASVVIQVAVFRSSRRRVFRMAPFHHHFELAGWAETTVIIRFWLLAAIASAIGLALFYSEYLAAIGG.

10 helical membrane-spanning segments follow: residues 3-23 (QILF…PVLI), 53-73 (GGVA…LIGI), 84-104 (GLLV…DDFI), 117-137 (TAKL…ALQF), 156-176 (IATV…LVSA), 187-207 (LDGL…IITF), 231-251 (LALI…WNAA), 255-275 (IFMG…LSIT), 283-303 (VVIG…VAVF), and 330-350 (VIIR…ALFY).

Belongs to the glycosyltransferase 4 family. MraY subfamily. The cofactor is Mg(2+).

It is found in the cell membrane. The catalysed reaction is UDP-N-acetyl-alpha-D-muramoyl-L-alanyl-gamma-D-glutamyl-meso-2,6-diaminopimeloyl-D-alanyl-D-alanine + di-trans,octa-cis-undecaprenyl phosphate = di-trans,octa-cis-undecaprenyl diphospho-N-acetyl-alpha-D-muramoyl-L-alanyl-D-glutamyl-meso-2,6-diaminopimeloyl-D-alanyl-D-alanine + UMP. The protein operates within cell wall biogenesis; peptidoglycan biosynthesis. Functionally, catalyzes the initial step of the lipid cycle reactions in the biosynthesis of the cell wall peptidoglycan: transfers peptidoglycan precursor phospho-MurNAc-pentapeptide from UDP-MurNAc-pentapeptide onto the lipid carrier undecaprenyl phosphate, yielding undecaprenyl-pyrophosphoryl-MurNAc-pentapeptide, known as lipid I. In Rhodococcus opacus (strain B4), this protein is Phospho-N-acetylmuramoyl-pentapeptide-transferase.